Consider the following 618-residue polypeptide: V-type proton ATPase catalytic subunit A (618 aa).

Residue 251–258 coordinates ATP; the sequence is GAFGCGKT.

Belongs to the ATPase alpha/beta chains family. As to quaternary structure, V-ATPase is a heteromultimeric enzyme composed of a peripheral catalytic V1 complex (main components: subunits A, B, C, D, E, and F) attached to an integral membrane V0 proton pore complex (main component: the proteolipid protein).

It carries out the reaction ATP + H2O + 4 H(+)(in) = ADP + phosphate + 5 H(+)(out). Functionally, catalytic subunit of the peripheral V1 complex of vacuolar ATPase. V-ATPase vacuolar ATPase is responsible for acidifying a variety of intracellular compartments in eukaryotic cells. The sequence is that of V-type proton ATPase catalytic subunit A (vatA) from Dictyostelium discoideum (Social amoeba).